The chain runs to 459 residues: Endoglucanase CelA (459 aa).

The signal sequence occupies residues 1 to 27 (MKRLLALLATGVSIVGLTALAGPPAQA). In terms of domain architecture, CBM2 spans 28–134 (ATGCKAEYTI…TLNGATCSGS (107 aa)). A disulfide bridge links Cys-31 with Cys-131. The interval 129–151 (ATCSGSVTDPPTDPPTDPPATGT) is disordered. The linker ('hinge') (Pro-Thr box) stretch occupies residues 136 to 147 (TDPPTDPPTDPP). A catalytic region spans residues 148-357 (ATGTPAAVNG…YAFHFYAASH (210 aa)). Glu-286 serves as the catalytic Proton donor. Residue Glu-378 is the Nucleophile of the active site.

This sequence belongs to the glycosyl hydrolase 5 (cellulase A) family. In terms of processing, the linker region (also termed 'hinge') may be a potential site for proteolysis.

The enzyme catalyses Endohydrolysis of (1-&gt;4)-beta-D-glucosidic linkages in cellulose, lichenin and cereal beta-D-glucans.. The polypeptide is Endoglucanase CelA (celA) (Streptomyces lividans).